The sequence spans 338 residues: DNA-directed RNA polymerase subunit alpha (338 aa).

The alpha N-terminal domain (alpha-NTD) stretch occupies residues 1-225; that stretch reads MLISQRPTLT…ELFGLARELN (225 aa). Positions 242-338 are alpha C-terminal domain (alpha-CTD); the sequence is YIAAYSMPIE…YIDVEPEDAE (97 aa). Positions 314–338 are disordered; the sequence is FDPSTLEGYDAETGGYIDVEPEDAE.

This sequence belongs to the RNA polymerase alpha chain family. In terms of assembly, homodimer. The RNAP catalytic core consists of 2 alpha, 1 beta, 1 beta' and 1 omega subunit. When a sigma factor is associated with the core the holoenzyme is formed, which can initiate transcription.

The catalysed reaction is RNA(n) + a ribonucleoside 5'-triphosphate = RNA(n+1) + diphosphate. Functionally, DNA-dependent RNA polymerase catalyzes the transcription of DNA into RNA using the four ribonucleoside triphosphates as substrates. In Corynebacterium efficiens (strain DSM 44549 / YS-314 / AJ 12310 / JCM 11189 / NBRC 100395), this protein is DNA-directed RNA polymerase subunit alpha.